A 230-amino-acid chain; its full sequence is 5'-methylthioadenosine/S-adenosylhomocysteine nucleosidase (230 aa).

Residue Glu-12 is the Proton acceptor of the active site. Substrate contacts are provided by residues Gly-78, Ile-152, and Met-173–Glu-174. Asp-197 functions as the Proton donor in the catalytic mechanism.

Belongs to the PNP/UDP phosphorylase family. MtnN subfamily.

The enzyme catalyses S-adenosyl-L-homocysteine + H2O = S-(5-deoxy-D-ribos-5-yl)-L-homocysteine + adenine. It catalyses the reaction S-methyl-5'-thioadenosine + H2O = 5-(methylsulfanyl)-D-ribose + adenine. It carries out the reaction 5'-deoxyadenosine + H2O = 5-deoxy-D-ribose + adenine. The protein operates within amino-acid biosynthesis; L-methionine biosynthesis via salvage pathway; S-methyl-5-thio-alpha-D-ribose 1-phosphate from S-methyl-5'-thioadenosine (hydrolase route): step 1/2. Catalyzes the irreversible cleavage of the glycosidic bond in both 5'-methylthioadenosine (MTA) and S-adenosylhomocysteine (SAH/AdoHcy) to adenine and the corresponding thioribose, 5'-methylthioribose and S-ribosylhomocysteine, respectively. Also cleaves 5'-deoxyadenosine, a toxic by-product of radical S-adenosylmethionine (SAM) enzymes, into 5-deoxyribose and adenine. This Haemophilus influenzae (strain 86-028NP) protein is 5'-methylthioadenosine/S-adenosylhomocysteine nucleosidase.